Reading from the N-terminus, the 171-residue chain is Protein GrpE (171 aa).

A disordered region spans residues 1–22; it reads MNHEQPDIESQQSAADAAATAG.

The protein belongs to the GrpE family. As to quaternary structure, homodimer.

It is found in the cytoplasm. Participates actively in the response to hyperosmotic and heat shock by preventing the aggregation of stress-denatured proteins, in association with DnaK and GrpE. It is the nucleotide exchange factor for DnaK and may function as a thermosensor. Unfolded proteins bind initially to DnaJ; upon interaction with the DnaJ-bound protein, DnaK hydrolyzes its bound ATP, resulting in the formation of a stable complex. GrpE releases ADP from DnaK; ATP binding to DnaK triggers the release of the substrate protein, thus completing the reaction cycle. Several rounds of ATP-dependent interactions between DnaJ, DnaK and GrpE are required for fully efficient folding. The polypeptide is Protein GrpE (Stenotrophomonas maltophilia (strain K279a)).